We begin with the raw amino-acid sequence, 108 residues long: Thiosulfate sulfurtransferase GlpE (108 aa).

The Rhodanese domain occupies 17 to 105 (QEKEAVLVDI…WQRQFPAEVA (89 aa)). Catalysis depends on Cys-65, which acts as the Cysteine persulfide intermediate.

It belongs to the GlpE family.

It is found in the cytoplasm. It carries out the reaction thiosulfate + hydrogen cyanide = thiocyanate + sulfite + 2 H(+). The enzyme catalyses thiosulfate + [thioredoxin]-dithiol = [thioredoxin]-disulfide + hydrogen sulfide + sulfite + 2 H(+). Functionally, transferase that catalyzes the transfer of sulfur from thiosulfate to thiophilic acceptors such as cyanide or dithiols. May function in a CysM-independent thiosulfate assimilation pathway by catalyzing the conversion of thiosulfate to sulfite, which can then be used for L-cysteine biosynthesis. The sequence is that of Thiosulfate sulfurtransferase GlpE from Escherichia coli O157:H7.